We begin with the raw amino-acid sequence, 371 residues long: Pyruvate dehydrogenase E1 component subunit alpha (371 aa).

As to quaternary structure, heterodimer of an alpha and a beta chain. Requires thiamine diphosphate as cofactor.

It catalyses the reaction N(6)-[(R)-lipoyl]-L-lysyl-[protein] + pyruvate + H(+) = N(6)-[(R)-S(8)-acetyldihydrolipoyl]-L-lysyl-[protein] + CO2. Its activity is regulated as follows. Activity of the E1 module is inhibited by the pyruvate dehydrogenase inhibitor PdhI. The pyruvate dehydrogenase complex catalyzes the overall conversion of pyruvate to acetyl-CoA and CO(2). It contains multiple copies of three enzymatic components: pyruvate dehydrogenase (E1), dihydrolipoamide acetyltransferase (E2) and lipoamide dehydrogenase (E3). In terms of biological role, the B.subtilis PDH complex also possesses branched-chain 2-oxoacid dehydrogenase (BCDH) activity. The polypeptide is Pyruvate dehydrogenase E1 component subunit alpha (Bacillus subtilis (strain 168)).